The sequence spans 313 residues: Ribose-phosphate pyrophosphokinase (313 aa).

ATP is bound by residues 37–39 and 96–97; these read DGE and RQ. Mg(2+) is bound by residues histidine 131 and aspartate 170. The active site involves lysine 193. D-ribose 5-phosphate-binding positions include arginine 195, aspartate 219, and 223–227; that span reads DTAGT.

This sequence belongs to the ribose-phosphate pyrophosphokinase family. Class I subfamily. Homohexamer. Mg(2+) is required as a cofactor.

It localises to the cytoplasm. The enzyme catalyses D-ribose 5-phosphate + ATP = 5-phospho-alpha-D-ribose 1-diphosphate + AMP + H(+). Its pathway is metabolic intermediate biosynthesis; 5-phospho-alpha-D-ribose 1-diphosphate biosynthesis; 5-phospho-alpha-D-ribose 1-diphosphate from D-ribose 5-phosphate (route I): step 1/1. Its function is as follows. Involved in the biosynthesis of the central metabolite phospho-alpha-D-ribosyl-1-pyrophosphate (PRPP) via the transfer of pyrophosphoryl group from ATP to 1-hydroxyl of ribose-5-phosphate (Rib-5-P). The chain is Ribose-phosphate pyrophosphokinase from Pseudomonas syringae pv. tomato (strain ATCC BAA-871 / DC3000).